The chain runs to 495 residues: Alpha,alpha-trehalose-phosphate synthase [UDP-forming] 56 kDa subunit (495 aa).

D-glucose 6-phosphate-binding residues include tyrosine 102 and aspartate 156. 2 residues coordinate UDP: arginine 293 and lysine 298. Positions 293 and 298 each coordinate UDP-alpha-D-glucose. Arginine 331 contacts D-glucose 6-phosphate. UDP is bound by residues isoleucine 370 and 396 to 400; that span reads LVSYE. UDP-alpha-D-glucose contacts are provided by residues isoleucine 370 and 392–400; that span reads DGMNLVSYE.

Belongs to the glycosyltransferase 20 family. In terms of assembly, the trehalose synthase complex is composed of the two catalytic subunits TPS1 and TPS2 and at least one of the two regulatory subunits TPS3 or TSL1.

The protein resides in the cytoplasm. The enzyme catalyses D-glucose 6-phosphate + UDP-alpha-D-glucose = alpha,alpha-trehalose 6-phosphate + UDP + H(+). It functions in the pathway carbohydrate biosynthesis. Its activity is regulated as follows. Activated by fructose 6-phosphate. Inorganic phosphate inhibits the synthase activity in the complex, but activates the synthase activity in the free monomeric form. Synthase catalytic subunit of the trehalose synthase complex that catalyzes the production of trehalose from glucose-6-phosphate and UDP-alpha-D-glucose in a two step process. Can function independently of the complex. This is Alpha,alpha-trehalose-phosphate synthase [UDP-forming] 56 kDa subunit from Saccharomyces cerevisiae (strain ATCC 204508 / S288c) (Baker's yeast).